Here is a 763-residue protein sequence, read N- to C-terminus: Phosphoglycerol transferase I (763 aa).

4 consecutive transmembrane segments (helical) span residues 1-21 (MSEL…AWKA), 26-46 (WWFA…ITLF), 77-97 (ILPG…LGWI), and 108-128 (FGYS…SPAF).

Belongs to the OpgB family.

It is found in the cell inner membrane. It carries out the reaction a phosphatidylglycerol + a membrane-derived-oligosaccharide D-glucose = a 1,2-diacyl-sn-glycerol + a membrane-derived-oligosaccharide 6-(glycerophospho)-D-glucose.. The protein operates within glycan metabolism; osmoregulated periplasmic glucan (OPG) biosynthesis. Its function is as follows. Transfers a phosphoglycerol residue from phosphatidylglycerol to the membrane-bound nascent glucan backbones. In Escherichia coli O7:K1 (strain IAI39 / ExPEC), this protein is Phosphoglycerol transferase I.